We begin with the raw amino-acid sequence, 352 residues long: Quinolinate synthase (352 aa).

2 residues coordinate iminosuccinate: H48 and S69. C114 lines the [4Fe-4S] cluster pocket. Residues 140–142 (YAN) and S157 each bind iminosuccinate. C201 provides a ligand contact to [4Fe-4S] cluster. Iminosuccinate-binding positions include 227–229 (HPE) and T244. A [4Fe-4S] cluster-binding site is contributed by C298.

Belongs to the quinolinate synthase family. Type 1 subfamily. It depends on [4Fe-4S] cluster as a cofactor.

The protein resides in the cytoplasm. The catalysed reaction is iminosuccinate + dihydroxyacetone phosphate = quinolinate + phosphate + 2 H2O + H(+). Its pathway is cofactor biosynthesis; NAD(+) biosynthesis; quinolinate from iminoaspartate: step 1/1. Catalyzes the condensation of iminoaspartate with dihydroxyacetone phosphate to form quinolinate. The sequence is that of Quinolinate synthase from Pseudomonas aeruginosa (strain UCBPP-PA14).